Reading from the N-terminus, the 190-residue chain is RNA pyrophosphohydrolase (190 aa).

The 144-residue stretch at 6–149 (GYRPNVGIVL…KRGVYARALC (144 aa)) folds into the Nudix hydrolase domain. The short motif at 38 to 59 (GGMHSDETPVEAMYRELNEETG) is the Nudix box element.

The protein belongs to the Nudix hydrolase family. RppH subfamily. A divalent metal cation serves as cofactor.

Its function is as follows. Accelerates the degradation of transcripts by removing pyrophosphate from the 5'-end of triphosphorylated RNA, leading to a more labile monophosphorylated state that can stimulate subsequent ribonuclease cleavage. In Xylella fastidiosa (strain 9a5c), this protein is RNA pyrophosphohydrolase.